A 164-amino-acid polypeptide reads, in one-letter code: Ribosome maturation factor RimM (164 aa).

The 73-residue stretch at 92–164 (PDSEYYVANL…FVVIVPPEFI (73 aa)) folds into the PRC barrel domain.

This sequence belongs to the RimM family. In terms of assembly, binds ribosomal protein uS19.

It localises to the cytoplasm. Its function is as follows. An accessory protein needed during the final step in the assembly of 30S ribosomal subunit, possibly for assembly of the head region. Essential for efficient processing of 16S rRNA. May be needed both before and after RbfA during the maturation of 16S rRNA. It has affinity for free ribosomal 30S subunits but not for 70S ribosomes. This Orientia tsutsugamushi (strain Ikeda) (Rickettsia tsutsugamushi) protein is Ribosome maturation factor RimM.